We begin with the raw amino-acid sequence, 443 residues long: ATP-dependent protease ATPase subunit HslU (443 aa).

ATP contacts are provided by residues isoleucine 18, 60 to 65 (GVGKTE), aspartate 256, glutamate 321, and arginine 393.

The protein belongs to the ClpX chaperone family. HslU subfamily. A double ring-shaped homohexamer of HslV is capped on each side by a ring-shaped HslU homohexamer. The assembly of the HslU/HslV complex is dependent on binding of ATP.

The protein localises to the cytoplasm. Functionally, ATPase subunit of a proteasome-like degradation complex; this subunit has chaperone activity. The binding of ATP and its subsequent hydrolysis by HslU are essential for unfolding of protein substrates subsequently hydrolyzed by HslV. HslU recognizes the N-terminal part of its protein substrates and unfolds these before they are guided to HslV for hydrolysis. The protein is ATP-dependent protease ATPase subunit HslU of Nitrosospira multiformis (strain ATCC 25196 / NCIMB 11849 / C 71).